We begin with the raw amino-acid sequence, 294 residues long: 33 kDa chaperonin (294 aa).

Cystine bridges form between Cys235–Cys237 and Cys268–Cys271.

The protein belongs to the HSP33 family. In terms of processing, under oxidizing conditions two disulfide bonds are formed involving the reactive cysteines. Under reducing conditions zinc is bound to the reactive cysteines and the protein is inactive.

It is found in the cytoplasm. Functionally, redox regulated molecular chaperone. Protects both thermally unfolding and oxidatively damaged proteins from irreversible aggregation. Plays an important role in the bacterial defense system toward oxidative stress. The polypeptide is 33 kDa chaperonin (Proteus mirabilis (strain HI4320)).